The following is a 485-amino-acid chain: Rop guanine nucleotide exchange factor 2 (485 aa).

The interval 1–36 (MENLPNHEENDDVGYHQSPGPIDPNDHSASETPVYS) is disordered. In terms of domain architecture, PRONE spans 107–485 (LAVQEISEPE…YVDKTMRGEE (379 aa)).

Interacts with ARC10/ROP11. Expressed in the vascular tissues of roots, leaves, sepals, petals and siliques.

Guanine-nucleotide exchange factor (GEF) that acts as an activator of Rop (Rho of plants) GTPases by promoting the exchange of GDP for GTP. This chain is Rop guanine nucleotide exchange factor 2 (ROPGEF2), found in Arabidopsis thaliana (Mouse-ear cress).